The following is a 155-amino-acid chain: uncharacterized protein (155 aa).

2 disordered regions span residues 24-63 (RVGYREGPTVETKKIQPQLPDEDGNESDKEDEQPQVVVLK) and 80-155 (KAAK…DENE). The span at 43 to 56 (PDEDGNESDKEDEQ) shows a compositional bias: acidic residues. S50 bears the Phosphoserine mark. K108 is modified (N6-acetyllysine). The span at 128–147 (KQSPVRKNSQKQIKNSSLLS) shows a compositional bias: polar residues. Phosphoserine occurs at positions 130, 147, and 150.

This is an uncharacterized protein from Rattus norvegicus (Rat).